The primary structure comprises 121 residues: Putative iron-sulfur cluster insertion protein ErpA (121 aa).

C49, C113, and C115 together coordinate iron-sulfur cluster.

It belongs to the HesB/IscA family. Homodimer. The cofactor is iron-sulfur cluster.

In terms of biological role, required for insertion of 4Fe-4S clusters. The polypeptide is Putative iron-sulfur cluster insertion protein ErpA (Paracidovorax citrulli (strain AAC00-1) (Acidovorax citrulli)).